The following is a 660-amino-acid chain: DNA ligase (660 aa).

Residues 33–37 (DFVYD), 82–83 (SL), and Glu110 each bind NAD(+). Residue Lys112 is the N6-AMP-lysine intermediate of the active site. Residues Arg133, Glu167, Lys281, and Lys305 each coordinate NAD(+). Cys396, Cys399, Cys412, and Cys417 together coordinate Zn(2+). Positions 583–660 (GENKLLAGKK…SFEDIKSYLD (78 aa)) constitute a BRCT domain.

It belongs to the NAD-dependent DNA ligase family. LigA subfamily. Mg(2+) serves as cofactor. It depends on Mn(2+) as a cofactor.

It catalyses the reaction NAD(+) + (deoxyribonucleotide)n-3'-hydroxyl + 5'-phospho-(deoxyribonucleotide)m = (deoxyribonucleotide)n+m + AMP + beta-nicotinamide D-nucleotide.. DNA ligase that catalyzes the formation of phosphodiester linkages between 5'-phosphoryl and 3'-hydroxyl groups in double-stranded DNA using NAD as a coenzyme and as the energy source for the reaction. It is essential for DNA replication and repair of damaged DNA. In Borreliella burgdorferi (strain ATCC 35210 / DSM 4680 / CIP 102532 / B31) (Borrelia burgdorferi), this protein is DNA ligase.